The following is a 345-amino-acid chain: S-adenosylmethionine:tRNA ribosyltransferase-isomerase (345 aa).

It belongs to the QueA family. As to quaternary structure, monomer.

It is found in the cytoplasm. The catalysed reaction is 7-aminomethyl-7-carbaguanosine(34) in tRNA + S-adenosyl-L-methionine = epoxyqueuosine(34) in tRNA + adenine + L-methionine + 2 H(+). Its pathway is tRNA modification; tRNA-queuosine biosynthesis. Functionally, transfers and isomerizes the ribose moiety from AdoMet to the 7-aminomethyl group of 7-deazaguanine (preQ1-tRNA) to give epoxyqueuosine (oQ-tRNA). In Acinetobacter baumannii (strain AB0057), this protein is S-adenosylmethionine:tRNA ribosyltransferase-isomerase.